The sequence spans 397 residues: Putative efflux system protein YvrP (397 aa).

A helical transmembrane segment spans residues 8–28 (LIGGAICAGVLVLAGIGAGGF). A coiled-coil region spans residues 106 to 183 (EDHSDEVEQA…KELAGLTKNK (78 aa)).

The protein belongs to the membrane fusion protein (MFP) (TC 8.A.1) family.

It is found in the cell membrane. The chain is Putative efflux system protein YvrP (yvrP) from Bacillus subtilis (strain 168).